Here is a 249-residue protein sequence, read N- to C-terminus: Coproheme decarboxylase (249 aa).

Fe-coproporphyrin III-binding positions include Arg-131, 145-149 (YPMNK), His-172, Gln-185, and Ser-223. Residue Tyr-145 is part of the active site.

Belongs to the ChdC family. Type 1 subfamily. The cofactor is Fe-coproporphyrin III.

The enzyme catalyses Fe-coproporphyrin III + 2 H2O2 + 2 H(+) = heme b + 2 CO2 + 4 H2O. It catalyses the reaction Fe-coproporphyrin III + H2O2 + H(+) = harderoheme III + CO2 + 2 H2O. It carries out the reaction harderoheme III + H2O2 + H(+) = heme b + CO2 + 2 H2O. The protein operates within porphyrin-containing compound metabolism; protoheme biosynthesis. Involved in coproporphyrin-dependent heme b biosynthesis. Catalyzes the decarboxylation of Fe-coproporphyrin III (coproheme) to heme b (protoheme IX), the last step of the pathway. The reaction occurs in a stepwise manner with a three-propionate intermediate. The polypeptide is Coproheme decarboxylase (Thermus thermophilus (strain ATCC BAA-163 / DSM 7039 / HB27)).